A 460-amino-acid chain; its full sequence is Hemopexin (460 aa).

Positions 1-23 (MARTVVALNILVLLGLCWSLAVA) are cleaved as a signal peptide. N-linked (GlcNAc...) asparagine glycosylation is found at N38 and N64. Disulfide bonds link C50–C230, C148–C153, and C187–C199. 4 Hemopexin repeats span residues 53-93 (AWSF…WKNP), 94-138 (VTSV…FPGI), 139-183 (PYPP…SWPA), and 184-230 (VGNC…FISC). Residue H79 participates in heme binding. Heme is bound at residue H149. Residue N186 is glycosylated (N-linked (GlcNAc...) asparagine). A heme-binding site is contributed by H235. N-linked (GlcNAc...) asparagine glycosylation is found at N240 and N246. 3 disulfide bridges follow: C255/C458, C364/C406, and C416/C433. Hemopexin repeat units lie at residues 257 to 302 (ADPG…WPQG), 303 to 350 (PSAV…LGSP), 355 to 394 (LDTI…WAEL), and 398 to 448 (HEKV…SLPQ). H291 serves as a coordination point for heme.

It belongs to the hemopexin family. As to expression, expressed by the liver and secreted in plasma.

The protein localises to the secreted. Its function is as follows. Binds heme and transports it to the liver for breakdown and iron recovery, after which the free hemopexin returns to the circulation. This is Hemopexin (Hpx) from Rattus norvegicus (Rat).